Reading from the N-terminus, the 137-residue chain is MGDWKGYISAVLRDQRIDDVAIVGHSDNRCVWASRPGGLLAAISPQEVGVLTGPDRHTFLQTGLSVAGRRCCVIRDYLLAEGDGVLDARTKGLDGRAICVGHTPRALLVLMGRRGVHGGILNKTVHDLIGGLREQCS.

This sequence belongs to the profilin family. As to quaternary structure, interacts with ACTRT3. Detected in round spermatids.

The protein localises to the cytoplasm. The protein resides in the cytoskeleton. It is found in the nucleus. In terms of biological role, binds to actin and affects the structure of the cytoskeleton. Slightly reduces actin polymerization. Binds to poly-L-proline, phosphatidylinositol 3-phosphate (PtdIns(3)P), phosphatidylinositol 4,5-bisphosphate (PtdIns(4,5)P2), and phosphatidylinositol 4-phosphate (PtdIns(4)P). May be involved in spermatogenesis. The protein is Profilin-3 (Pfn3) of Rattus norvegicus (Rat).